The chain runs to 320 residues: Malate dehydrogenase (320 aa).

NAD(+) is bound by residues G10–G15 and D34. Substrate-binding residues include R83 and R89. NAD(+) is bound by residues N96 and I119–N121. Substrate contacts are provided by N121 and R152. Catalysis depends on H176, which acts as the Proton acceptor.

The protein belongs to the LDH/MDH superfamily. MDH type 3 family.

The catalysed reaction is (S)-malate + NAD(+) = oxaloacetate + NADH + H(+). Functionally, catalyzes the reversible oxidation of malate to oxaloacetate. This Jannaschia sp. (strain CCS1) protein is Malate dehydrogenase.